A 345-amino-acid chain; its full sequence is Methionine import ATP-binding protein MetN (345 aa).

The region spanning 2–241 (IKLKNISKVF…PKTLLAQEFI (240 aa)) is the ABC transporter domain. 38–45 (GASGAGKS) serves as a coordination point for ATP.

This sequence belongs to the ABC transporter superfamily. Methionine importer (TC 3.A.1.24) family. As to quaternary structure, the complex is composed of two ATP-binding proteins (MetN), two transmembrane proteins (MetI) and a solute-binding protein (MetQ).

The protein localises to the cell inner membrane. The catalysed reaction is L-methionine(out) + ATP + H2O = L-methionine(in) + ADP + phosphate + H(+). The enzyme catalyses D-methionine(out) + ATP + H2O = D-methionine(in) + ADP + phosphate + H(+). In terms of biological role, part of the ABC transporter complex MetNIQ involved in methionine import. Responsible for energy coupling to the transport system. This is Methionine import ATP-binding protein MetN from Histophilus somni (strain 129Pt) (Haemophilus somnus).